Consider the following 209-residue polypeptide: Claudin-4 (209 aa).

The Cytoplasmic segment spans residues 1–7 (MASMGLQ). The interaction with EPHA2 stretch occupies residues 1 to 103 (MASMGLQVMG…GVLLSVVGGK (103 aa)). A helical membrane pass occupies residues 8 to 28 (VMGIALAVLGWLAVMLCCALP). Over 29-81 (MWRVTAFIGSNIVTSQTIWEGLWMNCVVQSTGQMQCKVYDSLLALPQDLQAAR) the chain is Extracellular. A disulfide bridge connects residues C54 and C64. Residues 82–102 (ALVIISIIVAALGVLLSVVGG) traverse the membrane as a helical segment. At 103-117 (KCTNCLEDESAKAKT) the chain is on the cytoplasmic side. Residues 118–138 (MIVAGVVFLLAGLMVIVPVSW) form a helical membrane-spanning segment. At 139 to 160 (TAHNIIQDFYNPLVASGQKREM) the chain is on the extracellular side. The helical transmembrane segment at 161-181 (GASLYVGWAASGLLLLGGGLL) threads the bilayer. Over 182 to 209 (CCNCPPRTDKPYSAKYSAARSAAASNYV) the chain is Cytoplasmic. Y208 is modified (phosphotyrosine; by EPHA2). An interactions with TJP1, TJP2 and TJP3 region spans residues 208-209 (YV).

It belongs to the claudin family. As to quaternary structure, can form heteropolymeric strands with other claudins. Interacts with CLDN8. Interacts with CLDN1. Directly interacts with TJP1/ZO-1. Interacts with TJP2/ZO-2 and TJP3/ZO-3. Interacts with EPHA2; phosphorylates CLDN4 and may regulate tight junctions. In terms of assembly, (Microbial infection) Interacts (via both extracellular domains) with Clostridium perfringens enterotoxin CPE; the interaction may disrupt claudin assembly in tight junctions. In terms of processing, phosphorylated. Phosphorylation by EPHA2 is stimulated by EFNA1 and alters interaction with TJP1.

It is found in the cell junction. The protein localises to the tight junction. Its subcellular location is the cell membrane. It carries out the reaction chloride(in) = chloride(out). The catalysed reaction is bromide(in) = bromide(out). It catalyses the reaction iodide(out) = iodide(in). The enzyme catalyses fluoride(in) = fluoride(out). Its function is as follows. Can associate with other claudins to regulate tight junction structural and functional strand dynamics. May coassemble with CLDN8 into tight junction strands containing anion-selective channels that convey paracellular chloride permeability in renal collecting ducts. May integrate into CLDN3 strands to modulate localized tight junction barrier properties. May disrupt strand assembly of channel-forming CLDN2 and CLDN15 and inhibit cation conductance. Cannot form tight junction strands on its own. The protein is Claudin-4 of Homo sapiens (Human).